The chain runs to 81 residues: Conotoxin Cl9.6 (81 aa).

The signal sequence occupies residues 1-20 (MSTLGMTLLILLLLLPLATP). The propeptide occupies 21-40 (DDVGQPPKRDTLRNLLKIGT). Disulfide bonds link Cys-46/Cys-69, Cys-54/Cys-76, and Cys-60/Cys-78.

Expressed by the venom duct.

The protein localises to the secreted. The chain is Conotoxin Cl9.6 from Californiconus californicus (California cone).